A 470-amino-acid chain; its full sequence is Tubulin gamma chain (470 aa).

144-150 (AGGTGSG) lines the GTP pocket.

This sequence belongs to the tubulin family.

It is found in the cytoplasm. The protein localises to the cytoskeleton. It localises to the microtubule organizing center. The protein resides in the spindle pole body. Tubulin is the major constituent of microtubules. The gamma chain is found at microtubule organizing centers (MTOC) such as the spindle poles or the centrosome, suggesting that it is involved in the minus-end nucleation of microtubule assembly. The sequence is that of Tubulin gamma chain (TUB4) from Eremothecium gossypii (strain ATCC 10895 / CBS 109.51 / FGSC 9923 / NRRL Y-1056) (Yeast).